Here is a 208-residue protein sequence, read N- to C-terminus: Large ribosomal subunit protein uL4 (208 aa).

The tract at residues 45-89 (RQGTHAHKNRSAVSGGGKKPWRQKGTGRARQGSTRSPQWRGGGTV) is disordered.

The protein belongs to the universal ribosomal protein uL4 family. As to quaternary structure, part of the 50S ribosomal subunit.

Its function is as follows. One of the primary rRNA binding proteins, this protein initially binds near the 5'-end of the 23S rRNA. It is important during the early stages of 50S assembly. It makes multiple contacts with different domains of the 23S rRNA in the assembled 50S subunit and ribosome. In terms of biological role, forms part of the polypeptide exit tunnel. This Lactococcus lactis subsp. lactis (strain IL1403) (Streptococcus lactis) protein is Large ribosomal subunit protein uL4.